A 327-amino-acid chain; its full sequence is Lipoyl synthase (327 aa).

The [4Fe-4S] cluster site is built by cysteine 72, cysteine 77, cysteine 83, cysteine 98, cysteine 102, cysteine 105, and serine 313. The Radical SAM core domain maps to 83-302 (CWSHGTATIM…RKVGLEKGFL (220 aa)).

It belongs to the radical SAM superfamily. Lipoyl synthase family. Requires [4Fe-4S] cluster as cofactor.

Its subcellular location is the cytoplasm. The enzyme catalyses [[Fe-S] cluster scaffold protein carrying a second [4Fe-4S](2+) cluster] + N(6)-octanoyl-L-lysyl-[protein] + 2 oxidized [2Fe-2S]-[ferredoxin] + 2 S-adenosyl-L-methionine + 4 H(+) = [[Fe-S] cluster scaffold protein] + N(6)-[(R)-dihydrolipoyl]-L-lysyl-[protein] + 4 Fe(3+) + 2 hydrogen sulfide + 2 5'-deoxyadenosine + 2 L-methionine + 2 reduced [2Fe-2S]-[ferredoxin]. It participates in protein modification; protein lipoylation via endogenous pathway; protein N(6)-(lipoyl)lysine from octanoyl-[acyl-carrier-protein]: step 2/2. Its function is as follows. Catalyzes the radical-mediated insertion of two sulfur atoms into the C-6 and C-8 positions of the octanoyl moiety bound to the lipoyl domains of lipoate-dependent enzymes, thereby converting the octanoylated domains into lipoylated derivatives. This is Lipoyl synthase from Francisella tularensis subsp. holarctica (strain FTNF002-00 / FTA).